The primary structure comprises 344 residues: Fructose-1,6-bisphosphatase, cytosolic (344 aa).

Residues glutamate 71, glutamate 100, aspartate 121, leucine 123, and aspartate 124 each coordinate Mg(2+). Substrate contacts are provided by residues 124–127 (DGSS), asparagine 215, tyrosine 247, tyrosine 267, and lysine 277. A Mg(2+)-binding site is contributed by glutamate 283.

This sequence belongs to the FBPase class 1 family. Requires Mg(2+) as cofactor.

The protein localises to the cytoplasm. It catalyses the reaction beta-D-fructose 1,6-bisphosphate + H2O = beta-D-fructose 6-phosphate + phosphate. In Oryza coarctata (Wild rice), this protein is Fructose-1,6-bisphosphatase, cytosolic.